Consider the following 445-residue polypeptide: Zinc finger protein SHOOT GRAVITROPISM 5 (445 aa).

The span at Ser-22–Ser-31 shows a compositional bias: low complexity. Residues Ser-22–Val-59 form a disordered region. Over residues Glu-32–Thr-42 the composition is skewed to polar residues. C2H2-type zinc fingers lie at residues Tyr-73–His-95, Tyr-115–His-145, and Trp-151–His-178. Positions 153, 156, 169, 173, 180, 182, 195, and 199 each coordinate Zn(2+). Residues His-178–Ala-201 form a CCHC-type 2; atypical zinc finger. The tract at residues Arg-188–Ser-200 is SHR-binding. 2 disordered regions span residues Arg-203–Arg-253 and Ser-281–Ser-314. Polar residues predominate over residues Thr-214–Gln-248. Low complexity predominate over residues Ser-281–Gln-293. Positions Met-340–Ser-397 form a coiled coil.

Mainly expressed in the endodermis, the gravity-sensing tissue in inflorescence stems. Mostly present in stems and flowers, and, to a lower extent, in seedlings, hypocotyls, roots and the shoot apical meristem (SAM).

The protein resides in the nucleus. Transcription factor involved in inflorescence stems gravitropism, probably by regulating starch accumulation in amyloplasts of graviperceptive cells. Required for stem circumnutation movements. Regulates lateral organ morphogenesis and gravitropic responses. Acts cooperatively with IDD16 to control silique and branche orientation. Involved in the establishment of auxin gradients through the regulation of auxin biosynthesis and transport. This is Zinc finger protein SHOOT GRAVITROPISM 5 from Arabidopsis thaliana (Mouse-ear cress).